The primary structure comprises 222 residues: Probable GTP-binding protein EngB (222 aa).

Positions 27–202 constitute an EngB-type G domain; that stretch reads TGIEVAFAGR…AKKLDEWFLG (176 aa). Residues 35–42, 61–65, 81–84, 148–151, and 181–183 contribute to the GTP site; these read GRSNAGKS, GRTQL, DLPG, TKAD, and FSS. Positions 42 and 63 each coordinate Mg(2+).

The protein belongs to the TRAFAC class TrmE-Era-EngA-EngB-Septin-like GTPase superfamily. EngB GTPase family. Requires Mg(2+) as cofactor.

Functionally, necessary for normal cell division and for the maintenance of normal septation. This chain is Probable GTP-binding protein EngB, found in Pseudoalteromonas translucida (strain TAC 125).